We begin with the raw amino-acid sequence, 519 residues long: Membrane-bound glycerophospholipid O-acyltransferase 2 (519 aa).

The next 6 helical transmembrane spans lie at Pro-22 to Phe-42, Thr-61 to Val-81, Cys-88 to Gly-108, Phe-184 to Gly-204, Leu-236 to Glu-256, and Tyr-288 to Phe-305. Catalysis depends on residues Asn-341 and His-372. 3 consecutive transmembrane segments (helical) span residues Phe-365–Gly-385, Ile-415–Leu-435, and Phe-443–Pro-463.

This sequence belongs to the membrane-bound acyltransferase family.

It is found in the endoplasmic reticulum membrane. It carries out the reaction a 1-acyl-sn-glycero-3-phosphocholine + an acyl-CoA = a 1,2-diacyl-sn-glycero-3-phosphocholine + CoA. The catalysed reaction is a 1-acyl-sn-glycero-3-phosphoethanolamine + an acyl-CoA = a 1,2-diacyl-sn-glycero-3-phosphoethanolamine + CoA. It catalyses the reaction a 1-acyl-sn-glycero-3-phosphate + an acyl-CoA = a 1,2-diacyl-sn-glycero-3-phosphate + CoA. The enzyme catalyses (9Z)-hexadecenoyl-CoA + 1-hexadecanoyl-sn-glycero-3-phosphocholine = 1-hexadecanoyl-2-(9Z-hexadecenoyl)-sn-glycero-3-phosphocholine + CoA. It carries out the reaction 1-hexadecanoyl-sn-glycero-3-phosphoethanolamine + (9Z)-octadecenoyl-CoA = 1-hexadecanoyl-2-(9Z-octadecenoyl)-sn-glycero-3-phosphoethanolamine + CoA. The catalysed reaction is 1-hexadecanoyl-sn-glycero-3-phosphoethanolamine + (9Z)-hexadecenoyl-CoA = 1-hexadecanoyl-2-(9Z)-hexadecenoyl-sn-glycero-3-phosphoethanolamine + CoA. It catalyses the reaction 1-(9Z-octadecenoyl)-sn-glycero-3-phospho-L-serine + hexadecanoyl-CoA = 1-(9Z)-octadecenoyl-2-hexadecanoyl-sn-glycero-3-phosphoserine + CoA. The enzyme catalyses (9Z,12Z)-octadecadienoyl-CoA + 1-hexadecanoyl-sn-glycero-3-phosphocholine = 1-hexadecanoyl-2-(9Z,12Z-octadecadienoyl)-sn-glycero-3-phosphocholine + CoA. It carries out the reaction 1-hexadecanoyl-sn-glycero-3-phosphocholine + (9Z)-octadecenoyl-CoA = 1-hexadecanoyl-2-(9Z-octadecenoyl)-sn-glycero-3-phosphocholine + CoA. The catalysed reaction is 1-hexadecanoyl-sn-glycero-3-phosphate + (9Z)-hexadecenoyl-CoA = 1-hexadecanoyl-2-[(9Z)-hexadec-9-enoyl]-sn-glycero-3-phosphate + CoA. It catalyses the reaction 1-hexadecanoyl-sn-glycero-3-phosphate + (9Z)-octadecenoyl-CoA = 1-hexadecanoyl-2-(9Z-octadecenoyl)-sn-glycero-3-phosphate + CoA. The enzyme catalyses a 1-O-(1Z-alkenyl)-sn-glycero-3-phosphocholine + (9Z)-octadecenoyl-CoA = 1-O-(1Z)-alkenyl-2-(9Z)-octadecenoyl-sn-glycero-3-phosphocholine + CoA. It carries out the reaction a 1-O-(1Z-alkenyl)-sn-glycero-3-phosphoethanolamine + (9Z)-octadecenoyl-CoA = 1-O-(1Z)-alkenyl-2-(9Z)-octadecenoyl-sn-glycero-3-phosphoethanolamine + CoA. The catalysed reaction is 1-octadecanoyl-sn-glycero-3-phosphoethanolamine + (9Z)-octadecenoyl-CoA = 1-octadecanoyl-2-(9Z-octadecenoyl)-sn-glycero-3-phosphoethanolamine + CoA. It catalyses the reaction 1-octadecanoyl-sn-glycero-3-phosphocholine + (9Z)-octadecenoyl-CoA = 1-octadecanoyl-2-(9Z-octadecenoyl)-sn-glycero-3-phosphocholine + CoA. The enzyme catalyses 1-(9Z-octadecenoyl)-sn-glycero-3-phosphoethanolamine + (9Z)-octadecenoyl-CoA = 1,2-di-(9Z-octadecenoyl)-sn-glycero-3-phosphoethanolamine + CoA. It participates in lipid metabolism; phospholipid metabolism. Its activity is regulated as follows. Partially inhibited by thimerosal. Acyltransferase which catalyzes the transfer of an acyl group from an acyl-CoA to a lysophospholipid leading to the production of a phospholipid and participates in the reacylation step of the phospholipid remodeling pathway also known as the Lands cycle. May catalyze preferentially the acylation of lysophosphatidylethanolamine (1-acyl-sn-glycero-3-phosphoethanolamine or LPE) and lysophosphatidic acid (LPA) and to a lesser extend lysophosphatidylcholine (LPC) and lysophosphatidylserine (LPS). Prefers oleoyl-CoA as the acyl donor. May be involved in chondrocyte differentiation. This Rattus norvegicus (Rat) protein is Membrane-bound glycerophospholipid O-acyltransferase 2.